A 1073-amino-acid polypeptide reads, in one-letter code: MKLLYTEISYSMTEILVKEARAYADKGYRVFYIAPNSLSFEKERSVLALLPEQGSFAITVTRFEQMARYFTLAKAANRQALDDNGLAMIFYRVLMQLQEDELKVFHRLRTDQAFIAQLVELYKELQAANLTAFDLTTLDRPEKQEDLITIMTKAEQLIAQGDYDQSSRLAQLAEAIKSKSLDDELRQTVLVIDGFTRFSAEEEQLLALLNEACEEIVIGAYISQKAYRLAFTKGNLYEASLAFIQQLAQQFQTKPIYTTSEKVFDVSFSRLTQLLEANHDYSQLDWQLSAKDKSKVVIWQALNQKEELEHVTKAIREKLYQGYRYKDMLVLLGDVASYQLQIGPIFEKFEIPYYIGKQEPMSAHPLVQFVESLERGRRYNWRREDIVNLLKSGLFGRFQEGELDQLEQYLVFADIQGFTKFSRPFTLNSSRQYPLPLLNQLRLAVVTPLQQLFKSQKQLGASLLDKLMTFFKTIQLADNFEALAGSRREADREKDEEVWKTFTGILETFYQVFGQEKMTLADCLALIKMGMQTAHYRTVPATLDVVSIKSYDLVEPHSKPFVFAIGLSRSHFPKQTKNTSLISDQERASINEQTASYQRLDVPSFENIKKNHQTALSLFNAATQELVLSLPTSLTNSSDDVSPYLKELIALGVPVIEKGKNRLSHSAADIGNYKALLSRLVAINRQGIADDMTSEDRNFWTVALRYLKRRLADEQLSLPAFEHHLTTKPVAPEVIETRFPSQQPLSLSSSALTVFYNNQYKYFLKYVLGLQEPESIHPDARIHGQYLHRIFELVTKDRSNAAFDQKLGAAIAAVNQQSAFQQVYQADAEGRYSLEVLKGIAYSTAPVLNLNQGMQVAKQEEAFELALGHQALIRGVIDRIDQLADGRLGIVDYKSSARVFDIGAFYNGLSPQLVTYLAALKNKGQGLFGAMYLHMQEPRLSLSDFKVLDDQLVAAAYKELTYKGIFLAQAKEYLANGSYHLNNTLYETDELETLLAYNEQLYLSAVKQIKTGHFLINPYTADGKSVQGDQLKAITRFEADLDLGYARRLVVLPAKERRQAFLTRMNEEIKHED.

This sequence belongs to the helicase family. AddB/RexB type 2 subfamily. In terms of assembly, heterodimer of AddA and RexB. Requires Mg(2+) as cofactor.

In terms of biological role, the heterodimer acts as both an ATP-dependent DNA helicase and an ATP-dependent, dual-direction single-stranded exonuclease. Recognizes the chi site generating a DNA molecule suitable for the initiation of homologous recombination. This subunit has 5' -&gt; 3' nuclease activity but not helicase activity. This chain is ATP-dependent helicase/deoxyribonuclease subunit B, found in Streptococcus equi subsp. zooepidemicus (strain MGCS10565).